We begin with the raw amino-acid sequence, 410 residues long: Serine hydroxymethyltransferase (410 aa).

Residues leucine 116 and 120–122 (GHL) contribute to the (6S)-5,6,7,8-tetrahydrofolate site. Lysine 225 carries the N6-(pyridoxal phosphate)lysine modification.

The protein belongs to the SHMT family. In terms of assembly, homodimer. It depends on pyridoxal 5'-phosphate as a cofactor.

It is found in the cytoplasm. It carries out the reaction (6R)-5,10-methylene-5,6,7,8-tetrahydrofolate + glycine + H2O = (6S)-5,6,7,8-tetrahydrofolate + L-serine. The protein operates within one-carbon metabolism; tetrahydrofolate interconversion. It participates in amino-acid biosynthesis; glycine biosynthesis; glycine from L-serine: step 1/1. Functionally, catalyzes the reversible interconversion of serine and glycine with tetrahydrofolate (THF) serving as the one-carbon carrier. This reaction serves as the major source of one-carbon groups required for the biosynthesis of purines, thymidylate, methionine, and other important biomolecules. Also exhibits THF-independent aldolase activity toward beta-hydroxyamino acids, producing glycine and aldehydes, via a retro-aldol mechanism. This chain is Serine hydroxymethyltransferase, found in Lacticaseibacillus casei (strain BL23) (Lactobacillus casei).